The following is a 349-amino-acid chain: Ribosomal RNA small subunit methyltransferase H 1 (349 aa).

Residues 79–81, Asp99, Phe129, Asp148, and Gln155 contribute to the S-adenosyl-L-methionine site; that span reads GGH.

Belongs to the methyltransferase superfamily. RsmH family.

It is found in the cytoplasm. It carries out the reaction cytidine(1402) in 16S rRNA + S-adenosyl-L-methionine = N(4)-methylcytidine(1402) in 16S rRNA + S-adenosyl-L-homocysteine + H(+). Specifically methylates the N4 position of cytidine in position 1402 (C1402) of 16S rRNA. The sequence is that of Ribosomal RNA small subunit methyltransferase H 1 from Agathobacter rectalis (strain ATCC 33656 / DSM 3377 / JCM 17463 / KCTC 5835 / VPI 0990) (Eubacterium rectale).